A 397-amino-acid polypeptide reads, in one-letter code: MRFTLKTTAIVSAAALLAGFGPPPRAAELPPGRLATTEDYFAQQAKQAVTPDVMAQLAYMNYIDFISPFYSRGCSFEAWELKHTPQRVIKYSIAFYAYGLASVALIDPKLRALAGHDLDIAVSKMKCKRVWGDWEEDGFGTDPIEKENIMYKGHLNLMYGLYQLVTGSRRYEAEHAHLTRIIHDEIAANPFAGIVCEPDNYFVQCNSVAYLSLWVYDRLHGTDYRAATRAWLDFIQKDLIDPERGAFYLSYHPESGAVKPWISAYTTAWTLAMVHGMDPAFSERYYPRFKQTFVEVYDEGRKARVRETAGTDDADGGVGLASAFTLLLAREMGDQQLFDQLLNHLEPPAKPSIVSASLRYEHPGSLLFDELLFLAKVHAGFGALLRMPPPAAKLAGK.

Positions 1-26 (MRFTLKTTAIVSAAALLAGFGPPPRA) are cleaved as a signal peptide. The active-site Proton donor/acceptor is Asp64. Cystine bridges form between Cys74-Cys127 and Cys196-Cys205. Residue Cys196 coordinates (2E)-geraniol.

Homotetramer. Homopentamer.

The protein resides in the periplasm. It catalyses the reaction (S)-linalool = beta-myrcene + H2O. It carries out the reaction (2E)-geraniol = (S)-linalool. It functions in the pathway terpene metabolism; monoterpene degradation. Is inhibited by molecular oxygen, high salt concentrations (NaCl, KCl, or MgCl(2)), urea, and Ti(III)citrate. Activity is not affected by EDTA. In terms of biological role, anaerobically catalyzes the stereospecific hydration of beta-myrcene to (3S)-linalool and the isomerization of (3S)-linalool to geraniol. Is thus involved in the initial steps of the anaerobic degradation of the monoterpene beta-myrcene. Also catalyzes the reverse reactions, i.e. the isomerization of geraniol to linalool and the dehydration of linalool to myrcene. In this direction, the formation of myrcene from geraniol may be seen as a detoxification process for the monoterpene alcohol. Shows a relatively broad substrate specificity and can use various geraniol and linalool derivatives. Substrates required a specific alpha-methylallyl alcohol signature motif. Neither the monoterpenes alpha- and beta-ocimene nor the monoterpenoids citronellol and nerol can be used as substrates. The polypeptide is Linalool dehydratase/isomerase (Castellaniella defragrans (strain DSM 12143 / CCUG 39792 / 65Phen) (Alcaligenes defragrans)).